The primary structure comprises 252 residues: Phosphate import ATP-binding protein PstB 1 (252 aa).

An ABC transporter domain is found at L6 to I247. Position 38 to 45 (G38 to S45) interacts with ATP.

It belongs to the ABC transporter superfamily. Phosphate importer (TC 3.A.1.7) family. In terms of assembly, the complex is composed of two ATP-binding proteins (PstB), two transmembrane proteins (PstC and PstA) and a solute-binding protein (PstS).

The protein resides in the cell membrane. The enzyme catalyses phosphate(out) + ATP + H2O = ADP + 2 phosphate(in) + H(+). Its function is as follows. Part of the ABC transporter complex PstSACB involved in phosphate import. Responsible for energy coupling to the transport system. The chain is Phosphate import ATP-binding protein PstB 1 from Streptococcus agalactiae serotype Ia (strain ATCC 27591 / A909 / CDC SS700).